The primary structure comprises 274 residues: MAVVKVKPTSPGRRAVVKVVHSHLHKGKPEASLLEPQIQNAGRNNNGHITIRHKGGGHKHHYRVVDFKRNKDGIPAKVERIEYDPNRTAHIALVCYADGERRYIIAPRGLEVGATILSGSEAPIKAGNTLPIRNIPVGSTMHCVELLAGKGAQIARSAGTSVTLLARESTYAQVRLRSGEVRRIHIECRATIGEVSNEEHNLRQYGKAGAIRWKGVRPTVRGVAMNPVDHPHGGGEGRTGEGQVPVSPWNTMTKGYRTRSNKRTQTFIVSRRKK.

The tract at residues 224–274 (AMNPVDHPHGGGEGRTGEGQVPVSPWNTMTKGYRTRSNKRTQTFIVSRRKK) is disordered. The span at 229-239 (DHPHGGGEGRT) shows a compositional bias: basic and acidic residues.

Belongs to the universal ribosomal protein uL2 family. As to quaternary structure, part of the 50S ribosomal subunit. Forms a bridge to the 30S subunit in the 70S ribosome.

Functionally, one of the primary rRNA binding proteins. Required for association of the 30S and 50S subunits to form the 70S ribosome, for tRNA binding and peptide bond formation. It has been suggested to have peptidyltransferase activity; this is somewhat controversial. Makes several contacts with the 16S rRNA in the 70S ribosome. This is Large ribosomal subunit protein uL2 from Methylibium petroleiphilum (strain ATCC BAA-1232 / LMG 22953 / PM1).